A 213-amino-acid chain; its full sequence is Ethylene-responsive transcription factor WIN1 (213 aa).

Residues 15-72 (KFRGVRQRHWGSWVSEIRHPLLKRRVWLGTFETAEEAARAYDEAAVLMSGRNAKTNFP) constitute a DNA-binding region (AP2/ERF). Positions 70–80 (NFPIQRSSTGE) are enriched in polar residues. Disordered regions lie at residues 70–99 (NFPI…GSST) and 159–213 (ASTD…RFII). Residues 159–174 (ASTDAASQSTSATTAP) are compositionally biased toward low complexity.

This sequence belongs to the AP2/ERF transcription factor family. ERF subfamily. As to expression, mostly expressed in roots, stems and anthers, and, to a lower extent, in leaves, seeds and silks.

The protein resides in the nucleus. In terms of biological role, promotes cuticle formation by inducing the expression of enzymes involved in wax biosynthesis, particularly promoting very-long-chain waxes formation. Confers drought resistance. Acts as a transcriptional activator binding directly to promoter regions of CER2, CER3.2 and KCS1, wax biosynthesis-related genes. Binds to the GCC-box pathogenesis-related promoter element. May be involved in the regulation of gene expression by stress factors and by components of stress signal transduction pathways. The sequence is that of Ethylene-responsive transcription factor WIN1 from Zea mays (Maize).